Consider the following 130-residue polypeptide: General stress protein 13 (130 aa).

The S1 motif domain occupies 8 to 77 (GSVYTGKVTG…EKGKISLSIR (70 aa)). A disordered region spans residues 76 to 109 (IRATQAAPEKKESKPRKPKAAQVSEEASTPQGFN). Over residues 100 to 109 (EEASTPQGFN) the composition is skewed to polar residues.

As to quaternary structure, found in association with the 30S subunit of the ribosome.

It is found in the cytoplasm. This Bacillus subtilis (strain 168) protein is General stress protein 13 (yugI).